Reading from the N-terminus, the 95-residue chain is Antitoxin VapB41 (95 aa).

Its function is as follows. Antitoxin component of a type II toxin-antitoxin (TA) system. This chain is Antitoxin VapB41 (vapB41), found in Mycobacterium tuberculosis (strain CDC 1551 / Oshkosh).